Reading from the N-terminus, the 619-residue chain is Dihydroxy-acid dehydratase 1 (619 aa).

Aspartate 81 contributes to the Mg(2+) binding site. Residue cysteine 122 coordinates [2Fe-2S] cluster. Residues aspartate 123 and lysine 124 each contribute to the Mg(2+) site. At lysine 124 the chain carries N6-carboxylysine. Cysteine 201 is a binding site for [2Fe-2S] cluster. A Mg(2+)-binding site is contributed by glutamate 496. Serine 522 serves as the catalytic Proton acceptor.

This sequence belongs to the IlvD/Edd family. As to quaternary structure, homodimer. [2Fe-2S] cluster is required as a cofactor. It depends on Mg(2+) as a cofactor.

The enzyme catalyses (2R)-2,3-dihydroxy-3-methylbutanoate = 3-methyl-2-oxobutanoate + H2O. It catalyses the reaction (2R,3R)-2,3-dihydroxy-3-methylpentanoate = (S)-3-methyl-2-oxopentanoate + H2O. It functions in the pathway amino-acid biosynthesis; L-isoleucine biosynthesis; L-isoleucine from 2-oxobutanoate: step 3/4. Its pathway is amino-acid biosynthesis; L-valine biosynthesis; L-valine from pyruvate: step 3/4. In terms of biological role, functions in the biosynthesis of branched-chain amino acids. Catalyzes the dehydration of (2R,3R)-2,3-dihydroxy-3-methylpentanoate (2,3-dihydroxy-3-methylvalerate) into 2-oxo-3-methylpentanoate (2-oxo-3-methylvalerate) and of (2R)-2,3-dihydroxy-3-methylbutanoate (2,3-dihydroxyisovalerate) into 2-oxo-3-methylbutanoate (2-oxoisovalerate), the penultimate precursor to L-isoleucine and L-valine, respectively. The sequence is that of Dihydroxy-acid dehydratase 1 from Burkholderia lata (strain ATCC 17760 / DSM 23089 / LMG 22485 / NCIMB 9086 / R18194 / 383).